The primary structure comprises 1342 residues: MVYSYTEKKRIRKDFGKRPQVLDVPYLLSIQLDSFQKFIEQDPEGQYGLEAAFRSVFPIQSYSGNSELQYVSYRLGEPVFDVQECQIRGVTYSAPLRVKLRLVIYEREAPEGTVKDIKEQEVYMGEIPLMTDNGTFVINGTERVIVSQLHRSPGVFFDSDKGKTHSSGKVLYNARIIPYRGSWLDFEFDLKDNLFVRIDRRRKLPATIILRALNYTTEQILDLFFEKVVFEIRDNKLQMELIPERLRGETASFDIEANGKVYVEKGRRITARHIRQLEKDDIKHIEVPVEYIAGKVVSKDYVDESTGELICAANMELSLDLLAKLSQSGHKRIETLFTNDLDHGPYISETVRVDPTNDRLSALVEIYRMMRPGEPPTREAAESLFENLFFSEDRYDLSAVGRMKFNRSLLRDEIEGSGILSKDDIIDVMKKLIDIRNGKGEVDDIDHLGNRRIRSVGEMAENQFRVGLVRVERAVKERLSLGDLDTLMPQDMINAKPISAAVKEFFGSSQLSQFMDQNNPLSEITHKRRISALGPGGLTRERAGFEVRDVHPTHYGRVCPIETPEGPNIGLINSLSVYAQTNEYGFLETPYRRVVDGVVTDEIHYLSAIEEGNYVIAQANSNLDDEGHFVEDLVTCRSKGESSLFSRDQVDYMDVSTQQVVSVGASLIPFLEHDDANRALMGANMQRQAVPTLRADKPLVGTGMERAVAVDSGVTAVAKRGGTVQYVDASRIVIKVNEDEMYPGEAGIDIYNLTKYTRSNQNTCINQMPCVSLGEPVERGDVLADGPSTDLGELALGQNMRVAFMPWNGYNFEDSILVSERVVQEDRFTTIHIQELACVSRDTKLGPEEITADIPNVGEAALSKLDESGIVYIGAEVTGGDILVGKVTPKGETQLTPEEKLLRAIFGEKASDVKDSSLRVPNGVSGTVIDVQVFTRDGVEKDKRALEIEEMQLKQAKKDLSEELQILEAGLFSRIRAVLVSGGVEAEKLDKLPRDRWLELGLTDEEKQNQLEQLAEQYDELKHEFEKKLEAKRRKITQGDDLAPGVLKIVKVYLAVKRRIQPGDKMAGRHGNKGVISKINPIEDMPYDENGTPVDIVLNPLGVPSRMNIGQILETHLGMAAKGIGDKINAMLKQQQEVAKLREFIQRAYDLGADVRQKVDLSTFSDDEVLRLAENLRKGMPIATPVFDGAKEAEIKELLKLGDLPTSGQITLFDGRTGEQFERPVTVGYMYMLKLNHLVDDKMHARSTGSYSLVTQQPLGGKAQFGGQRFGEMEVWALEAYGAAYTLQEMLTVKSDDVNGRTKMYKNIVDGNHQMEPGMPESFNVLLKEIRSLGINIELEDE.

The protein belongs to the RNA polymerase beta chain family. The RNAP catalytic core consists of 2 alpha, 1 beta, 1 beta' and 1 omega subunit. When a sigma factor is associated with the core the holoenzyme is formed, which can initiate transcription.

The enzyme catalyses RNA(n) + a ribonucleoside 5'-triphosphate = RNA(n+1) + diphosphate. In terms of biological role, DNA-dependent RNA polymerase catalyzes the transcription of DNA into RNA using the four ribonucleoside triphosphates as substrates. The protein is DNA-directed RNA polymerase subunit beta of Salmonella choleraesuis (strain SC-B67).